The following is a 422-amino-acid chain: Probable protease eep (422 aa).

Zn(2+) is bound at residue H18. Residue E19 is part of the active site. Zn(2+) is bound at residue H22. The next 3 helical transmembrane spans lie at 176 to 196, 349 to 369, and 394 to 414; these read FAGP…AVFL, VVFL…LPIP, and EGII…LVTW. The PDZ domain occupies 179-273; sequence PMNNFILGFI…EEQLTVTPEK (95 aa).

Belongs to the peptidase M50B family. Zn(2+) is required as a cofactor.

The protein localises to the cell membrane. Functionally, involved in production of the peptide pheromone cAD1. In Enterococcus faecalis (strain ATCC 700802 / V583), this protein is Probable protease eep (eep).